A 173-amino-acid chain; its full sequence is Enhancer of split mdelta protein (173 aa).

Positions 15-72 (YRKVTKPLLERKRRARMNLYLDELKDLIVDTMDAQGEQVSKLEKADILELTVNYLKAQ) constitute a bHLH domain. Residues 93–126 (FRAGYTQAAYEVSHIFSTVPGLDLKFGTHLMKQL) enclose the Orange domain. The segment at 147–173 (VNLADQKRSKSPREEDIHHGEEVWRPW) is disordered. The span at 151-173 (DQKRSKSPREEDIHHGEEVWRPW) shows a compositional bias: basic and acidic residues. Positions 170 to 173 (WRPW) match the WRPW motif motif.

Transcription repression requires formation of a complex with a corepressor protein (Groucho).

It localises to the nucleus. In terms of biological role, transcriptional repressor of genes that require a bHLH protein for their transcription. May serve as a transcriptional regulator of the Achaete-scute complex (AS-C) genes. Contributes to the neural-epidermal lineage decision during early neurogenesis. As part of the Notch signaling pathway, required to maintain the self-renewal and identity of type II neuroblasts by regulating the expression of the transcriptional repressor erm. The chain is Enhancer of split mdelta protein from Drosophila melanogaster (Fruit fly).